Consider the following 321-residue polypeptide: Probable UDP-sugar transporter protein SLC35A4 (321 aa).

Topologically, residues 1 to 22 are cytoplasmic; that stretch reads MYSVNIEPDGSNHSPSRKRLKQ. Residues 23 to 43 traverse the membrane as a helical segment; that stretch reads ILWGLMLVLSVTIYGSHAPLI. At 44-56 the chain is on the lumenal side; it reads YLCKVNGEIPFSS. A helical membrane pass occupies residues 57–77; that stretch reads SAVVLLIELSKFVISLVFFLI. Residues 78 to 91 lie on the Cytoplasmic side of the membrane; it reads QDWKSLKASVSWHL. A helical transmembrane segment spans residues 92-112; the sequence is AAPYAVPAVLYGANNNLVVYI. The Lumenal portion of the chain corresponds to 113-119; that stretch reads QHFMDPS. A helical membrane pass occupies residues 120–140; sequence SFQVLSNLKIVSTAVLYSLFL. The Cytoplasmic portion of the chain corresponds to 141 to 149; sequence RQRLSVRRW. Residues 150–170 traverse the membrane as a helical segment; it reads LSVFLLLAAGVFYSYGGIQDL. Residues 171-180 are Lumenal-facing; that stretch reads EKVSSDTNLY. Residues 181-201 form a helical membrane-spanning segment; the sequence is VTLPGLLLMLAYCLISGLSAV. Residues 202 to 211 lie on the Cytoplasmic side of the membrane; that stretch reads YTEMTLKTQK. The helical transmembrane segment at 212-232 threads the bilayer; it reads IPLNMQNLYLYSFGIIINLTA. Residues 233–247 are Lumenal-facing; it reads HLTSSKNSDFFDGFS. The chain crosses the membrane as a helical span at residues 248-268; sequence VWVWVIILSQALNGLIMSLVM. The Cytoplasmic segment spans residues 269–321; that stretch reads KLSNNITRLFIISFSMLANGFLSFILFQLQLTALFFLAVVLIGLAVYMYYGMK.

Belongs to the nucleotide-sugar transporter family. SLC35A subfamily.

It localises to the golgi apparatus membrane. The catalysed reaction is CDP-L-ribitol(in) + CDP(out) = CDP-L-ribitol(out) + CDP(in). In terms of biological role, mediates the transport of CDP-ribitol. Does not exhibit CMP-sialic acid, UDP-galactose and UDP-N-acetylglucosamine transport activity. The sequence is that of Probable UDP-sugar transporter protein SLC35A4 from Xenopus tropicalis (Western clawed frog).